The primary structure comprises 380 residues: Ribosomal RNA large subunit methyltransferase G (380 aa).

It belongs to the methyltransferase superfamily. RlmG family.

It localises to the cytoplasm. It catalyses the reaction guanosine(1835) in 23S rRNA + S-adenosyl-L-methionine = N(2)-methylguanosine(1835) in 23S rRNA + S-adenosyl-L-homocysteine + H(+). Specifically methylates the guanine in position 1835 (m2G1835) of 23S rRNA. In Aeromonas hydrophila subsp. hydrophila (strain ATCC 7966 / DSM 30187 / BCRC 13018 / CCUG 14551 / JCM 1027 / KCTC 2358 / NCIMB 9240 / NCTC 8049), this protein is Ribosomal RNA large subunit methyltransferase G.